Here is a 483-residue protein sequence, read N- to C-terminus: Pre-glycoprotein polyprotein GP complex (483 aa).

Residue Gly-2 is the site of N-myristoyl glycine; by host attachment. Topologically, residues 2–17 are extracellular; that stretch reads GQFISFMQEIPIFLQE. The chain crosses the membrane as a helical span at residues 18 to 32; the sequence is ALNIALVAVSLICIV. Position 33 (Lys-33) is a topological domain, cytoplasmic. The helical transmembrane segment at 34 to 53 threads the bilayer; that stretch reads GLVNLYRCGLFQLMVFLVLA. Extracellular loops occupy residues 54–58 and 59–422; these read GRSCS and EETF…TLVD. Cys-57 is a binding site for Zn(2+). Asn-83 and Asn-95 each carry an N-linked (GlcNAc...) asparagine; by host glycan. Intrachain disulfides connect Cys-92-Cys-224, Cys-134-Cys-162, Cys-205-Cys-211, Cys-269-Cys-282, Cys-291-Cys-300, and Cys-354-Cys-375. N-linked (GlcNAc...) asparagine; by host glycosylation is found at Asn-164 and Asn-176. N-linked (GlcNAc...) asparagine; by host glycosylation is found at Asn-355, Asn-363, Asn-380, and Asn-385. A helical transmembrane segment spans residues 423–443; it reads ICFWSTVFFTSTLFLHLIGFP. The Cytoplasmic segment spans residues 444-483; that stretch reads THEHIRGEGCPLPHRLNSMGGCRCGKYLPLKKPTIWHRRH. The Zn(2+) site is built by His-445, His-447, Cys-453, His-457, Cys-465, Cys-467, and His-483.

It belongs to the arenaviridae GPC protein family. As to quaternary structure, homotetramer; disulfide-linked. In terms of assembly, homotetramer. GP2 homotetramers bind through ionic interactions with GP1 homotetramers to form the GP complex together with the stable signal peptide. The GP-C polyprotein interacts with the host protease MBTPS1/SKI-1 resulting in the polyprotein processing. In terms of processing, specific enzymatic cleavages in vivo yield mature proteins. GP-C polyprotein is cleaved in the endoplasmic reticulum by the host protease MBTPS1. Only cleaved glycoprotein is incorporated into virions. Post-translationally, the SSP remains stably associated with the GP complex following cleavage by signal peptidase and plays crucial roles in the trafficking of GP through the secretory pathway. Myristoylation is necessary for GP2-mediated fusion activity.

It is found in the virion membrane. The protein resides in the host endoplasmic reticulum membrane. Its subcellular location is the host Golgi apparatus membrane. The protein localises to the host cell membrane. In terms of biological role, class I viral fusion protein that directs fusion of viral and host endosomal membranes, leading to delivery of the nucleocapsid into the cytoplasm. Membrane fusion is mediated by irreversible conformational changes induced upon acidification in the endosome. Its function is as follows. Stable signal peptide (SSP): cleaved and functions as a signal peptide. In addition, it is also retained as the third component of the GP complex. The SSP is required for efficient glycoprotein expression, post-translational maturation cleavage of GP1 and GP2, glycoprotein transport to the cell surface plasma membrane, formation of infectious virus particles, and acid pH-dependent glycoprotein-mediated cell fusion. Functionally, interacts with the host receptor. The sequence is that of Pre-glycoprotein polyprotein GP complex from Tacaribe virus (strain V5) (TCRV).